Reading from the N-terminus, the 277-residue chain is Polyamine aminopropyltransferase (277 aa).

One can recognise a PABS domain in the interval 2–235 (ELWFTENQDE…SLWTFTMGSK (234 aa)). Gln-31 serves as a coordination point for S-methyl-5'-thioadenosine. 2 residues coordinate spermidine: His-62 and Asp-86. S-methyl-5'-thioadenosine-binding positions include Glu-106 and 137 to 138 (DG). Residue Asp-155 is the Proton acceptor of the active site. Residue 155–158 (DSTD) coordinates spermidine. Residue Pro-162 coordinates S-methyl-5'-thioadenosine.

The protein belongs to the spermidine/spermine synthase family. In terms of assembly, homodimer or homotetramer.

It is found in the cytoplasm. The enzyme catalyses S-adenosyl 3-(methylsulfanyl)propylamine + putrescine = S-methyl-5'-thioadenosine + spermidine + H(+). It functions in the pathway amine and polyamine biosynthesis; spermidine biosynthesis; spermidine from putrescine: step 1/1. In terms of biological role, catalyzes the irreversible transfer of a propylamine group from the amino donor S-adenosylmethioninamine (decarboxy-AdoMet) to putrescine (1,4-diaminobutane) to yield spermidine. The polypeptide is Polyamine aminopropyltransferase (Thermoanaerobacter pseudethanolicus (strain ATCC 33223 / 39E) (Clostridium thermohydrosulfuricum)).